A 70-amino-acid chain; its full sequence is Large ribosomal subunit protein bL31 (70 aa).

Residues C16, C18, C37, and C40 each contribute to the Zn(2+) site.

Belongs to the bacterial ribosomal protein bL31 family. Type A subfamily. In terms of assembly, part of the 50S ribosomal subunit. It depends on Zn(2+) as a cofactor.

Functionally, binds the 23S rRNA. This is Large ribosomal subunit protein bL31 from Shewanella halifaxensis (strain HAW-EB4).